Here is an 89-residue protein sequence, read N- to C-terminus: Small ribosomal subunit protein uS17 (89 aa).

The protein belongs to the universal ribosomal protein uS17 family. In terms of assembly, part of the 30S ribosomal subunit.

Its function is as follows. One of the primary rRNA binding proteins, it binds specifically to the 5'-end of 16S ribosomal RNA. The polypeptide is Small ribosomal subunit protein uS17 (Chlorobaculum tepidum (strain ATCC 49652 / DSM 12025 / NBRC 103806 / TLS) (Chlorobium tepidum)).